Consider the following 490-residue polypeptide: Delta(14)-sterol reductase (490 aa).

Transmembrane regions (helical) follow at residues F23–F43, V80–L100, L136–I156, F160–V180, E230–A250, L255–F275, and Q324–F344. NADP(+)-binding positions include K351, R355, I378, W383, and N390–Y391. The helical transmembrane segment at A436–I456 threads the bilayer. NADP(+)-binding positions include D462, C466–Y470, and Y477.

The protein belongs to the ERG4/ERG24 family.

It localises to the membrane. It carries out the reaction 4,4-dimethyl-5alpha-cholesta-8,24-dien-3beta-ol + NADP(+) = 4,4-dimethyl-5alpha-cholesta-8,14,24-trien-3beta-ol + NADPH + H(+). It functions in the pathway steroid biosynthesis; zymosterol biosynthesis; zymosterol from lanosterol: step 2/6. Its function is as follows. Reduces the C14=C15 double bond of 4,4-dimethyl-cholesta-8,14,24-trienol to produce 4,4-dimethyl-cholesta-8,24-dienol. This is Delta(14)-sterol reductase (erg-3) from Neurospora crassa (strain ATCC 24698 / 74-OR23-1A / CBS 708.71 / DSM 1257 / FGSC 987).